Consider the following 156-residue polypeptide: Ribosomally synthesized cyclic peptide victorin precursosr vicA1 (156 aa).

The N-terminal stretch at 1 to 21 (MVRITALMSGSILLFALQALA) is a signal peptide. 7 propeptides span residues 22–36 (MPVE…AEKR), 43–55 (KRGE…EEKR), 62–74 (KRGE…EEKR), 81–93 (KRGE…EEKR), 100–112 (KRGE…EEKR), 119–131 (KRGE…EEKR), and 138–150 (KRGE…EEKR).

VicA1 is processed by several endopeptidases including kexin proteases as well as the cluster-specific peptidases vicP1 and vicP2 to produce 7 identical copies of the hexapeptide Gly-Leu-Lys-Leu-Ala-Phe, that are further modified to yield victorins. After being excised from the precursor peptide, the core peptides are cyclized and modified post-translationally by enzymes encoded within the gene cluster. The ustYa family protein vicYb is required for the formation of the macrocycle in victorin and the copper amine oxidases (CAOs) vicK1 and vicK2 are responsible for converting victorin to the active form by oxidizing the N-terminal glycyl residue in the peptides to glyoxylate. Relaxed substrate specificity of enzymes in the victorin biosynthetic pathway results in a metabolic grid that produces a set of analogs including victorinines B, C, E or HV-toxin M.

Its pathway is mycotoxin biosynthesis. In terms of biological role, ribosomally synthesized cyclic peptide victorin precursor, part of the gene cluster that mediates the biosynthesis of the secondary metabolite victorin, the molecular basis for Victoria blight of oats. The vicA1 translated product contains a 7-fold repeated peptide embedding the hexapeptide Gly-Leu-Lys-Leu-Ala-Phe, that is converted into the cyclic victorin. The sequence is that of Ribosomally synthesized cyclic peptide victorin precursosr vicA1 from Bipolaris victoriae (strain FI3) (Victoria blight of oats agent).